A 141-amino-acid chain; its full sequence is MARKEFQLEIVTPERIVYSDKVVSITAQAEDGRLGILHDHRPLVTKLQIAPFSFITQEGQEENVAISGSGYLEVTPQKVTVLCQTAELSHEIELERAQEAKERAEERLQASDEAIDYSRAEASLKRAIARIDAARAQRNDD.

It belongs to the ATPase epsilon chain family. F-type ATPases have 2 components, CF(1) - the catalytic core - and CF(0) - the membrane proton channel. CF(1) has five subunits: alpha(3), beta(3), gamma(1), delta(1), epsilon(1). CF(0) has three main subunits: a, b and c.

It localises to the cell membrane. In terms of biological role, produces ATP from ADP in the presence of a proton gradient across the membrane. This is ATP synthase epsilon chain from Natranaerobius thermophilus (strain ATCC BAA-1301 / DSM 18059 / JW/NM-WN-LF).